The chain runs to 793 residues: Signal transducer and activator of transcription 5A (793 aa).

Residue tyrosine 90 is modified to Phosphotyrosine. A Phosphoserine modification is found at serine 128. The SH2 domain maps to 589–686 (WNDGAILGFV…EVFAKYYTPV (98 aa)). Tyrosine 682 carries the post-translational modification Phosphotyrosine. Residue tyrosine 694 is modified to Phosphotyrosine; by JAK2. The disordered stretch occupies residues 772–793 (DSLDPRLSPPAGLFTSARSSLS). Serine 779 is subject to Phosphoserine.

This sequence belongs to the transcription factor STAT family. Forms a homodimer or a heterodimer with a related family member. Binds NR3C1. Interacts with NCOA1 and SOCS7. Interacts with ERBB4. Interacts with EBF4. In terms of processing, ISGylated. Post-translationally, tyrosine phosphorylated in response to KITLG/SCF, IL2, IL3, IL7, IL15, CSF2/GMCSF, GH1, PRL, EPO and THPO. Activated KIT promotes phosphorylation on tyrosine residues and subsequent translocation to the nucleus. Tyrosine phosphorylated in response to constitutively activated FGFR1, FGFR2, FGFR3 and FGFR4. Tyrosine phosphorylation is required for DNA-binding activity and dimerization. Serine phosphorylation is also required for maximal transcriptional activity. Tyrosine phosphorylated in response to signaling via activated FLT3; wild-type FLT3 results in much weaker phosphorylation than constitutively activated mutant FLT3. Alternatively, can be phosphorylated by JAK2 at Tyr-694. In terms of tissue distribution, expressed in heart, lung, and weakly in muscle.

It is found in the cytoplasm. The protein resides in the nucleus. Functionally, carries out a dual function: signal transduction and activation of transcription. Mediates cellular responses to the cytokine KITLG/SCF and other growth factors. May mediate cellular responses to activated FGFR1, FGFR2, FGFR3 and FGFR4. Binds to the GAS element and activates PRL-induced transcription. Regulates the expression of milk proteins during lactation. This Rattus norvegicus (Rat) protein is Signal transducer and activator of transcription 5A (Stat5a).